Consider the following 345-residue polypeptide: Eukaryotic translation initiation factor 3 subunit F (345 aa).

Residues 30 to 166 enclose the MPN domain; sequence VVIQPQALFS…TRAYISAPVG (137 aa). Residues 308–345 form a disordered region; the sequence is GGESGSTESGQRGGQRGGKGGRGGQQRNQERSGEEVRA. Gly residues predominate over residues 318–331; the sequence is QRGGQRGGKGGRGG. The segment covering 335 to 345 has biased composition (basic and acidic residues); sequence NQERSGEEVRA.

The protein belongs to the eIF-3 subunit F family. As to quaternary structure, component of the eukaryotic translation initiation factor 3 (eIF-3) complex.

It is found in the cytoplasm. In terms of biological role, component of the eukaryotic translation initiation factor 3 (eIF-3) complex, which is involved in protein synthesis of a specialized repertoire of mRNAs and, together with other initiation factors, stimulates binding of mRNA and methionyl-tRNAi to the 40S ribosome. The eIF-3 complex specifically targets and initiates translation of a subset of mRNAs involved in cell proliferation. The chain is Eukaryotic translation initiation factor 3 subunit F from Aspergillus terreus (strain NIH 2624 / FGSC A1156).